The following is a 382-amino-acid chain: D-galactonate dehydratase (382 aa).

Aspartate 183 provides a ligand contact to Mg(2+). Histidine 185 (proton donor) is an active-site residue. Residues glutamate 209 and glutamate 235 each contribute to the Mg(2+) site. Histidine 285 acts as the Proton acceptor in catalysis.

Belongs to the mandelate racemase/muconate lactonizing enzyme family. GalD subfamily. Mg(2+) serves as cofactor.

It catalyses the reaction D-galactonate = 2-dehydro-3-deoxy-D-galactonate + H2O. It functions in the pathway carbohydrate acid metabolism; D-galactonate degradation; D-glyceraldehyde 3-phosphate and pyruvate from D-galactonate: step 1/3. Its function is as follows. Catalyzes the dehydration of D-galactonate to 2-keto-3-deoxy-D-galactonate. The polypeptide is D-galactonate dehydratase (Salmonella paratyphi A (strain AKU_12601)).